The primary structure comprises 600 residues: Dihydroxy-acid dehydratase (600 aa).

Position 82 (Asp-82) interacts with Mg(2+). Position 123 (Cys-123) interacts with [2Fe-2S] cluster. Mg(2+) is bound by residues Asp-124 and Lys-125. Lys-125 bears the N6-carboxylysine mark. Position 192 (Cys-192) interacts with [2Fe-2S] cluster. Glu-489 is a Mg(2+) binding site. The active-site Proton acceptor is the Ser-515.

The protein belongs to the IlvD/Edd family. Homodimer. [2Fe-2S] cluster serves as cofactor. Requires Mg(2+) as cofactor.

It catalyses the reaction (2R)-2,3-dihydroxy-3-methylbutanoate = 3-methyl-2-oxobutanoate + H2O. The enzyme catalyses (2R,3R)-2,3-dihydroxy-3-methylpentanoate = (S)-3-methyl-2-oxopentanoate + H2O. The protein operates within amino-acid biosynthesis; L-isoleucine biosynthesis; L-isoleucine from 2-oxobutanoate: step 3/4. It functions in the pathway amino-acid biosynthesis; L-valine biosynthesis; L-valine from pyruvate: step 3/4. In terms of biological role, functions in the biosynthesis of branched-chain amino acids. Catalyzes the dehydration of (2R,3R)-2,3-dihydroxy-3-methylpentanoate (2,3-dihydroxy-3-methylvalerate) into 2-oxo-3-methylpentanoate (2-oxo-3-methylvalerate) and of (2R)-2,3-dihydroxy-3-methylbutanoate (2,3-dihydroxyisovalerate) into 2-oxo-3-methylbutanoate (2-oxoisovalerate), the penultimate precursor to L-isoleucine and L-valine, respectively. This is Dihydroxy-acid dehydratase from Bacteroides fragilis (strain YCH46).